A 215-amino-acid polypeptide reads, in one-letter code: Fibrillarin-like rRNA/tRNA 2'-O-methyltransferase (215 aa).

Residues 1 to 29 form a disordered region; that stretch reads MKASSSLPDGVQRRQFDNRSRLTTHGTTV. A compositionally biased stretch (basic and acidic residues) spans 11-20; sequence VQRRQFDNRS. Residues 76–77, 92–93, 117–118, and 138–141 each bind S-adenosyl-L-methionine; these read TT, EF, DA, and DVAT.

This sequence belongs to the methyltransferase superfamily. Fibrillarin family. Interacts with nop5. Component of box C/D small ribonucleoprotein (sRNP) particles that contain rpl7ae, FlpA and nop5, plus a guide RNA.

Its function is as follows. Involved in pre-rRNA and tRNA processing. Utilizes the methyl donor S-adenosyl-L-methionine to catalyze the site-specific 2'-hydroxyl methylation of ribose moieties in rRNA and tRNA. Site specificity is provided by a guide RNA that base pairs with the substrate. Methylation occurs at a characteristic distance from the sequence involved in base pairing with the guide RNA. The sequence is that of Fibrillarin-like rRNA/tRNA 2'-O-methyltransferase from Haloquadratum walsbyi (strain DSM 16790 / HBSQ001).